The primary structure comprises 491 residues: Protein DETOXIFICATION 20 (491 aa).

Helical transmembrane passes span 37-57 (LWVV…VSMV), 75-95 (ITFT…AGAL), 120-140 (IVLT…GPIL), 156-176 (LALW…CQMF), 185-205 (IISY…WLLV), 214-234 (GAMT…LLYV), 265-285 (GGML…TGNL), 296-316 (AICI…LAAV), 337-357 (LIAV…FLFL), 381-401 (LLAF…VAIG), 413-433 (LACY…VVGL), and 438-458 (VWIG…VMTL).

It belongs to the multi antimicrobial extrusion (MATE) (TC 2.A.66.1) family.

It is found in the membrane. The sequence is that of Protein DETOXIFICATION 20 from Arabidopsis thaliana (Mouse-ear cress).